Consider the following 388-residue polypeptide: Sphingosine N-acyltransferase-like protein FUM17 (388 aa).

The next 2 helical transmembrane spans lie at 60 to 80 and 113 to 133; these read SWAL…IHPV and LWDL…RKFI. Residue Asn-146 is glycosylated (N-linked (GlcNAc...) asparagine). The TLC domain maps to 151–368; sequence GKQQRFMEQM…LLRNAYRLLF (218 aa). 4 consecutive transmembrane segments (helical) span residues 166–186, 204–224, 241–261, and 339–359; these read FAVM…LWIF, IKFY…VLVL, IITI…IGIS, and FITF…LYCL.

Belongs to the sphingosine N-acyltransferase family.

Its subcellular location is the endoplasmic reticulum membrane. It functions in the pathway mycotoxin biosynthesis. In terms of biological role, sphingosine N-acyltransferase-like protein; part of the gene cluster that mediates the biosynthesis of fumonisins B1 (FB1), B2 (FB2), B3 (FB3), and B4 (FB4), which are carcinogenic mycotoxins. May contribute to the biosynthesis of ceramide via interaction with Cer3. Does not confer resistance to FB1. The biosynthesis starts with the FUM1-catalyzed carbon chain assembly from one molecule of acetyl-CoA, eight molecules of malonyl-CoA, and two molecules of methionine (in S-adenosyl form). The C18 polyketide chain is released from the enzyme by a nucleophilic attack of a carbanion, which is derived from R-carbon of alanine by decarboxylation, on the carbonyl carbon of polyketide acyl chain. This step is catalyzed by the pyridoxal 5'-phosphate-dependent aminoacyl transferase FUM8. The resultant 3-keto intermediate is then stereospecifically reduced to a 3-hydroxyl product by reductase FUM13. Subsequent oxidations at C-10 by the cytochrome P450 monooxygenase FUM2, C-14 and C-15 by FUM6, FUM12 or FUM15, tricarballylic esterification of the hydroxyl groups on C-14 and C-15 by acyltransferase FUM14, and C-5 hydroxylation by 2-keto-glutarate-dependent dioxygenase FUM3 furnish the biosynthesis of fumonisins. The tricarballylic moieties are most likely derived from the citric acid cycle, and their addition to the carbon backbone may involve FUM7, FUM10, FUM11 and FUM14. The chain is Sphingosine N-acyltransferase-like protein FUM17 from Gibberella moniliformis (strain M3125 / FGSC 7600) (Maize ear and stalk rot fungus).